Consider the following 321-residue polypeptide: Phosphate metabolism protein 8 (321 aa).

This sequence belongs to the SSM1 family.

Functionally, may be involved in phosphate metabolism. In Saccharomyces cerevisiae (strain ATCC 204508 / S288c) (Baker's yeast), this protein is Phosphate metabolism protein 8 (PHM8).